The primary structure comprises 1202 residues: MDKKAIKTFAIQARRSLIESIKLKLENLGITKDGVAEKMSQSTNEIEYYGDKGLSITGQDIRRRRELVARLKGMAKQEEWSDALTDLIEEVAYTWFNRIIAIRFMEVNEYLPSGVRVLSSETKLKVPDILREAFEIEDDLGGYSVDEHGIIQKALDTEDPTDMDAAYVILFTKQANALNHYLPELFEKTDDFMQLLFTPSYSSGVIKDLVDDIKEDDFDVDEGGQVEIIGWLYQYYNTEPKDAAFKKKKYLSSDIPAVTQLFTPDWIVKYLVENSLGRYWIRVLHDRGDERTSLQIAQSFNWQYFMPEAKQDEISTRADLSKKRVEEITFVDPAMGSGHILIYAFDVLLQLYQSEGYSRREAAQNIVERNLFGLDIDRRAFQLTYFAMMMKLRRENRRSFELQLHPNVFEVPSTSLELKDFSGAKDGSPIDSGNLSDVLGRFGAGKELGSLITFESSIFDDKLINKIVSEREAGQLTFEMSDQVNHQWELRNLIRVGKALSSQYTISVTNPPYMGSGKMPKTLAKFVGKYYPASKSDLFAVFMERLQHLTKENGIFAMITQHQWMFLSSFKALRERMSSWPIINMAHLGTRAFEEIGGEVVQTTAFVVQKQKLQGFIGTYERLVDFDSQKKKQQAFLTAVQNPNLNYVYRTKQTNFEKIPGSPIAYWASKKKLELLQYSSYRLQNILSAREGMTTGNNALFMRSWHEVQFFKISFLSTAHQIERDKTWFPYNKGGAFRKWYGNIWYVINWKNHGEAIQSNIDKKTGRIRSHNYNGKFGFREAITWSAISSGMFSARYSPTGFLFDSKGVSSFANDHTTLLFCLAFLNSNSSSSFLELLSPTMDFKIGQVLNLPLAKQHSPQVVELTESLISSSREDWNSFENSWSFTTNILLTNIAEHHRNWTVEAAFQQWQKEADDRFNQLKANEEELNRIFIDLYGLQDELSPEEEDKDVSVRRANLPRDIKAFISYFIGCVFGRYSIDTPGLAYAGGDWDASKYKTFIPNKDDLILLTDDDYFGDDRDVMTRFKEFLTTTFGSENLNENLKFIADALGKRGDSSEEQIRAYLRDDFFKKDHLSTYQKRPIYWEFNSGRNGGFKALMYLHRYDRNTVAMIRTKYLHPLQEAYERKLVQLKKFEENEQQTRQKNKYKKQITTITKELDELIKYDEKLQHVANLHIDLDLDDGVLVNHAKAQADTKILTPLK.

The protein belongs to the methyltransferase superfamily. PglX adenine methyltransferase family.

It catalyses the reaction a 2'-deoxyadenosine in DNA + S-adenosyl-L-methionine = an N(6)-methyl-2'-deoxyadenosine in DNA + S-adenosyl-L-homocysteine + H(+). In terms of biological role, BREX systems (bacteriophage exclusion) provide immunity against bacteriophage. Part of a type 1 BREX system which protects against dsDNA phage. This system allows phage adsorption but prevents phage DNA replication, without degradation of the phage DNA. Methylation of bacterial DNA by this protein guides self/non-self discrimination. Functionally, probably methylates the adenine in the fifth position of the hexamer 5'-ACRCAG-3' in genomic DNA. N(6)-methylated adenine on the fifth position of 5'-ACRCAG-3' is found in the genome; there are 1906 sites in the genomic DNA. This Lacticaseibacillus casei (strain Zhang) (Lactobacillus casei) protein is Adenine-specific methyltransferase PglX.